The chain runs to 673 residues: UvrABC system protein C (673 aa).

One can recognise a GIY-YIG domain in the interval 16-95; that stretch reads VEPGVYKFRD…IKEFDPRFNV (80 aa). One can recognise a UVR domain in the interval 208–243; the sequence is DKMVRELERRMHAAAEDLDFETAARLRDDVQALRRA. The segment at 488-526 is disordered; that stretch reads RDEAERDELDGTAAGAPLVDDDETPTSRPGIDPTTGRPR.

The protein belongs to the UvrC family. As to quaternary structure, interacts with UvrB in an incision complex.

Its subcellular location is the cytoplasm. Its function is as follows. The UvrABC repair system catalyzes the recognition and processing of DNA lesions. UvrC both incises the 5' and 3' sides of the lesion. The N-terminal half is responsible for the 3' incision and the C-terminal half is responsible for the 5' incision. In Nocardia farcinica (strain IFM 10152), this protein is UvrABC system protein C.